A 160-amino-acid polypeptide reads, in one-letter code: KGPLGHIEYTGKGNFIAHGEPKFARRLAMLAGGTGITPIYQVIQAVLKDPDDRTEMFFAVYSNKTESDILLREELDAWAKKHSDRFKVWYVVDKAGNDWAFSTGRVNESIMRVHLPGPSDALALACGPPPINSAYGWQPSLENIGYKKDDVPVFMATTQS.

Threonine 37 serves as a coordination point for FAD.

This sequence belongs to the nitrate reductase family. As to quaternary structure, homodimer. The cofactor is FAD. Heme is required as a cofactor. Mo-molybdopterin serves as cofactor.

The catalysed reaction is nitrite + NAD(+) + H2O = nitrate + NADH + H(+). Functionally, nitrate reductase is a key enzyme involved in the first step of nitrate assimilation in plants, fungi and bacteria. The polypeptide is Nitrate reductase [NADH] (NIA) (Lotus tetragonolobus (Winged pea)).